We begin with the raw amino-acid sequence, 71 residues long: Small ribosomal subunit protein bS18 (71 aa).

Belongs to the bacterial ribosomal protein bS18 family. As to quaternary structure, part of the 30S ribosomal subunit. Forms a tight heterodimer with protein bS6.

In terms of biological role, binds as a heterodimer with protein bS6 to the central domain of the 16S rRNA, where it helps stabilize the platform of the 30S subunit. This Nostoc punctiforme (strain ATCC 29133 / PCC 73102) protein is Small ribosomal subunit protein bS18.